We begin with the raw amino-acid sequence, 603 residues long: Sulfite reductase [NADPH] flavoprotein alpha-component (603 aa).

The 139-residue stretch at 64–202 (ITLISASQTG…QAETWRAAIV (139 aa)) folds into the Flavodoxin-like domain. Residues 70–75 (SQTGNA), 117–120 (STQG), and 153–162 (LGDSSYEHFA) each bind FMN. The region spanning 236-452 (EAPLTAHLAL…IEHNDNFRLP (217 aa)) is the FAD-binding FR-type domain. FAD is bound by residues T326, L360, 390–393 (RLYS), 408–410 (TVG), Y414, and 423–426 (GGAS). Residues 523 to 524 (SR), 529 to 533 (KIYVQ), and D565 contribute to the NADP(+) site. Y603 is a binding site for FAD.

Belongs to the NADPH-dependent sulphite reductase flavoprotein subunit CysJ family. This sequence in the N-terminal section; belongs to the flavodoxin family. The protein in the C-terminal section; belongs to the flavoprotein pyridine nucleotide cytochrome reductase family. In terms of assembly, alpha(8)-beta(8). The alpha component is a flavoprotein, the beta component is a hemoprotein. The cofactor is FAD. FMN serves as cofactor.

It catalyses the reaction hydrogen sulfide + 3 NADP(+) + 3 H2O = sulfite + 3 NADPH + 4 H(+). Its pathway is sulfur metabolism; hydrogen sulfide biosynthesis; hydrogen sulfide from sulfite (NADPH route): step 1/1. In terms of biological role, component of the sulfite reductase complex that catalyzes the 6-electron reduction of sulfite to sulfide. This is one of several activities required for the biosynthesis of L-cysteine from sulfate. The flavoprotein component catalyzes the electron flow from NADPH -&gt; FAD -&gt; FMN to the hemoprotein component. This is Sulfite reductase [NADPH] flavoprotein alpha-component from Sodalis glossinidius (strain morsitans).